A 138-amino-acid polypeptide reads, in one-letter code: Host cell factor C1 regulator 1 (138 aa).

The interaction with HCFC1 stretch occupies residues 76–79 (DHPY). Residues 110–119 (IPEALRLLRL) carry the Nuclear export signal motif.

As to quaternary structure, interacts with HCFC1. In terms of tissue distribution, widely expressed.

It localises to the cytoplasm. The protein resides in the nucleus. In terms of biological role, regulates HCFC1 activity by modulating its subcellular localization. Overexpression of HCFC1R1 leads to accumulation of HCFC1 in the cytoplasm. HCFC1R1-mediated export may provide the pool of cytoplasmic HCFC1 required for import of virion-derived VP16 into the nucleus. The chain is Host cell factor C1 regulator 1 (HCFC1R1) from Homo sapiens (Human).